The sequence spans 440 residues: Ferredoxin--NADP reductase (440 aa).

Residues 17–75 (SRVFVYEVVGMRQNEETDQTNYPIRKSGSVFIRVPYNRMNQEMQRITRLGGKIVTIQTV) enclose the CpcD-like domain. The interval 99–142 (KSEGNGKATPVKTDSGAKAFAKPPAEEQLKKKDNKGNTMTQAKA) is disordered. Residues 122-133 (PAEEQLKKKDNK) are compositionally biased toward basic and acidic residues. Residues 155–279 (NAPFIGKVIS…TGPVGKEMLL (125 aa)) enclose the FAD-binding FR-type domain. FAD is bound by residues 214–217 (RLYS), 235–237 (CVR), tyrosine 241, 253–255 (VCS), and threonine 294. NADP(+) contacts are provided by serine 217 and arginine 237. NADP(+) is bound by residues threonine 294, 330-331 (VP), 360-361 (SR), 370-374 (RMYIQ), 399-400 (GL), and glutamate 438.

This sequence belongs to the ferredoxin--NADP reductase type 1 family. It depends on FAD as a cofactor.

It is found in the cellular thylakoid membrane. It catalyses the reaction 2 reduced [2Fe-2S]-[ferredoxin] + NADP(+) + H(+) = 2 oxidized [2Fe-2S]-[ferredoxin] + NADPH. This is Ferredoxin--NADP reductase (petH) from Nostoc sp. (strain ATCC 29151 / PCC 7119) (Anabaena sp.).